The chain runs to 252 residues: Phosphate import ATP-binding protein PstB (252 aa).

One can recognise an ABC transporter domain in the interval 6–247 (ITIEKLNLYY…PKDERTEKYI (242 aa)). 38–45 (GPSGCGKS) lines the ATP pocket.

This sequence belongs to the ABC transporter superfamily. Phosphate importer (TC 3.A.1.7) family. The complex is composed of two ATP-binding proteins (PstB), two transmembrane proteins (PstC and PstA) and a solute-binding protein (PstS).

It localises to the cell membrane. The catalysed reaction is phosphate(out) + ATP + H2O = ADP + 2 phosphate(in) + H(+). Its function is as follows. Part of the ABC transporter complex PstSACB involved in phosphate import. Responsible for energy coupling to the transport system. The polypeptide is Phosphate import ATP-binding protein PstB (Lactobacillus delbrueckii subsp. bulgaricus (strain ATCC 11842 / DSM 20081 / BCRC 10696 / JCM 1002 / NBRC 13953 / NCIMB 11778 / NCTC 12712 / WDCM 00102 / Lb 14)).